The following is a 290-amino-acid chain: Signal recognition particle receptor subunit beta (290 aa).

Residues 44–64 (VLLLALFTLIFIIIISKLFGS) form a helical membrane-spanning segment. GTP-binding positions include 92-100 (GLSNAGKTA), 114-117 (THTS), G140, and A268.

This sequence belongs to the SRP receptor beta subunit family. In terms of assembly, heterodimer of an alpha and a beta chain.

It is found in the endoplasmic reticulum membrane. Component of the signal recognition particle (SRP) complex receptor (SR). Ensures, in conjunction with the SRP complex, the correct targeting of the nascent secretory proteins to the endoplasmic reticulum membrane system. May mediate the membrane association of SR. The chain is Signal recognition particle receptor subunit beta (srprb) from Dictyostelium discoideum (Social amoeba).